The following is a 580-amino-acid chain: MDDTYNKLPDEIWLEIINFSNEKNLLFTNKSFFELFDFMKVEEDIIECIIKYNLLHILAYIISLGGPESFIIKKNIITTESLNRHFKMSCEKGQYTIVTYLVALGADFRIDNDYGLIHAAKNGHIGVVKYLVSKGVNIGANDNCAIKFASENGHLEVVEYLVSKGADINANNNYPIEMASKNGHLKVVEYLVSLGVDIRANDDYVVGLAYYYDHHEVVDYLVSQGAVLNKSKYSSSYNAFILLPVEIWIKIVNHTQEIGLLLTNRSFFELLSLINIKVDIIEYISNNNLTDVLKYLVFLKSINHPFCRFIRYSSLDDYLVKSCCEGDLSIIKDLILLGASERKAVMLACQNGHLEIIRYFVSQGFNIKCGSNCAVTIASENGHIEVVRYLISLGADINSGNNYAIKYASENGHLEVVKYLVDQGANIRANNDRAVRFASRKGHLEVVKYLVSKGANIRAKDDRAVTLASQNGHLEVVKYLVSQGTDIKAGDDYAVRWASRNGHLEVVKYLISQGANIKADDDYAVRWASLNGHLEVVKFLVNQNADIRAINNYAVRWAHKNKHFDVVEYLISQGAVINPT.

ANK repeat units follow at residues 81-110, 111-140, 141-170, 172-200, 202-230, 314-339, 340-369, 370-399, 400-429, 431-459, 461-489, 490-519, 521-549, and 551-579; these read SLNR…DFRI, DNDY…NIGA, NDNC…DINA, NNYP…DIRA, DDYV…VLNK, SLDD…LLGA, SERK…NIKC, GSNC…DINS, GNNY…NIRA, NDRA…NIRA, DDRA…DIKA, GDDY…NIKA, DDYA…DIRA, and NNYA…VINP.

The polypeptide is Putative ankyrin repeat protein L63 (Acanthamoeba polyphaga (Amoeba)).